The primary structure comprises 159 residues: 6,7-dimethyl-8-ribityllumazine synthase (159 aa).

5-amino-6-(D-ribitylamino)uracil contacts are provided by residues Phe-23, Ser-61–Glu-63, and Ala-85–Ile-87. Residue Asp-90 to Thr-91 coordinates (2S)-2-hydroxy-3-oxobutyl phosphate. His-93 functions as the Proton donor in the catalytic mechanism. Phe-118 provides a ligand contact to 5-amino-6-(D-ribitylamino)uracil. Arg-132 contacts (2S)-2-hydroxy-3-oxobutyl phosphate.

The protein belongs to the DMRL synthase family.

The catalysed reaction is (2S)-2-hydroxy-3-oxobutyl phosphate + 5-amino-6-(D-ribitylamino)uracil = 6,7-dimethyl-8-(1-D-ribityl)lumazine + phosphate + 2 H2O + H(+). Its pathway is cofactor biosynthesis; riboflavin biosynthesis; riboflavin from 2-hydroxy-3-oxobutyl phosphate and 5-amino-6-(D-ribitylamino)uracil: step 1/2. Catalyzes the formation of 6,7-dimethyl-8-ribityllumazine by condensation of 5-amino-6-(D-ribitylamino)uracil with 3,4-dihydroxy-2-butanone 4-phosphate. This is the penultimate step in the biosynthesis of riboflavin. This Synechococcus sp. (strain RCC307) protein is 6,7-dimethyl-8-ribityllumazine synthase.